The sequence spans 365 residues: MAPKDFFPPAPLDLDWDNIGIKVREVNGHVECAYNVATESWSEPQVVKGIDLTISGLSPALNYGQQAYEGMKAFRDPQGQIHIFRPEVHAARMAHSCEVVSIPPIPQAQFIRSVALAVSVNAEFVPPFDSSAALYIRPLAFGSGPQINLAQPEEYTFCVFVLPVTSLLGTKPVDALIMEEFDRTAPMGSGNAKVGGNYAPVLRWAAKARARGYGIPLHLDSKTRTEIDEFSAAGFIGVRDDDGKTTIVVPDSSCIIQSVTSDSCVQLARSYGWSVEVRPIKYTELPEFSEVLAVGTAAVIVPIGSITRDSLRDLIVYKPSEDGGYPCADKLFKSIKDIQRGLGKDVFNWCVPVHEPGAYFQPVSA.

Residue arginine 92 participates in pyridoxal 5'-phosphate binding. Residue lysine 193 is modified to N6-(pyridoxal phosphate)lysine. Glutamate 229 provides a ligand contact to pyridoxal 5'-phosphate.

This sequence belongs to the class-IV pyridoxal-phosphate-dependent aminotransferase family. Requires pyridoxal 5'-phosphate as cofactor.

The protein operates within secondary metabolite biosynthesis. In terms of biological role, aminotransferase; part of the gene cluster that mediates the biosynthesis of oxaleimides, cytotoxic compounds containing an unusual disubstituted succinimide moiety. The first step of the pathway is provided by the HR-PKS poxF that serves in a new mode of collaborative biosynthesis with the PKS-NRPS poxE, by providing the olefin containing amino acid substrate via the synthesis of an ACP-bound dec-4-enoate. The cytochrome P450 monooxygenase poxM-catalyzed oxidation at the alpha-position creates the enzyme-bound 2-hydroxydec-4-enoyl-ACP thioester, which may be prone to spontaneous hydrolysis to yield 2-hydroxydec-4-enoic acid due to increased electrophilicity of the carbonyl. 2-hydroxydec-4-enoic acid can then be further oxidized by poxM to yield the alpha-ketoacid 2-oxodec-4-enoicacid, which is reductively aminated by the aminotransferase poxL to yield (S,E)-2-aminodec-4-enoic acid. The Hybrid PKS-NRPS synthetase poxE then performs condensation between the octaketide product of its PKS modules and the amino group of (S,E)-2-aminodec-4-enoic acid which is activated and incorporated by the adenylation domain. The resulting aminoacyl product can be cyclized by the Diels-Alderase PoxQ and reductively released by the reductive (R) domain of poxE to yield an aldehyde intermediate. The released aldehyde is then substrate for a Knoevenagel condensation by the hydrolyase poxO followed by an oxidation at the 5-position of the pyrrolidone ring. The presence of the olefin from the amino acid building block allows for migration of the substituted allyl group to occur. This allylic transposition reaction takes place in a conjugate addition, semipinacol-like fashion to yield a succinimide intermediate. Iterative two-electron oxidations of the C7 methyl of the succinimide intermediate to the carboxylic acid can be catalyzed by one of two remaining cytochrome P450 monooxygenasess poxC or poxD to yield oxaleimide A. Subsequent oxidation yields the maleimide scaffold oxaleimide I. Both oxaleimide A and oxaleimide I can undergo oxidative modifications in the decalin ring to yield the series of products oxaleimides B to H. In Penicillium oxalicum, this protein is Aminotransferase poxL.